Consider the following 837-residue polypeptide: Protein translocase subunit SecA (837 aa).

ATP contacts are provided by residues Gln87, 105 to 109, and Asp494; that span reads GEGKT. Residues 788–837 are disordered; it reads HKESKSDLEYSDSENTETKKKPKRRSEPKVGRNDPCPCGSGKKYKKCCGK. 4 residues coordinate Zn(2+): Cys823, Cys825, Cys834, and Cys835.

Belongs to the SecA family. As to quaternary structure, monomer and homodimer. Part of the essential Sec protein translocation apparatus which comprises SecA, SecYEG and auxiliary proteins SecDF-YajC and YidC. The cofactor is Zn(2+).

The protein resides in the cell inner membrane. Its subcellular location is the cytoplasm. It carries out the reaction ATP + H2O + cellular proteinSide 1 = ADP + phosphate + cellular proteinSide 2.. Its function is as follows. Part of the Sec protein translocase complex. Interacts with the SecYEG preprotein conducting channel. Has a central role in coupling the hydrolysis of ATP to the transfer of proteins into and across the cell membrane, serving as an ATP-driven molecular motor driving the stepwise translocation of polypeptide chains across the membrane. The sequence is that of Protein translocase subunit SecA from Maridesulfovibrio salexigens (strain ATCC 14822 / DSM 2638 / NCIMB 8403 / VKM B-1763) (Desulfovibrio salexigens).